We begin with the raw amino-acid sequence, 552 residues long: MAGUK p55 subfamily member 2 (552 aa).

2 L27 domains span residues 8-59 (SESA…EETK) and 60-118 (LEAV…YETP). Position 42 is a phosphoserine (serine 42). A Phosphothreonine modification is found at threonine 117. At serine 121 the chain carries Phosphoserine. The 80-residue stretch at 140-219 (MVGIRKTAGE…SVILKILPSY (80 aa)) folds into the PDZ domain. The 69-residue stretch at 225–293 (PRQVFVKCHF…PSQLLEEKRK (69 aa)) folds into the SH3 domain. The Guanylate kinase-like domain occupies 350–537 (RKTLVLIGAQ…TFRELQTAME (188 aa)).

It belongs to the MAGUK family. As to quaternary structure, can homomultimerise. Interacts with CACNG2. Interacts (via the SH3-Guanylate kinase-like sub-module) with DLG4/PSD95 and DLGAP1/GKAP. Interacts (via the PDZ domain) with CADM1 (via C-terminus). Interacts with KCNN2/SK2 (via N-terminal domain). Interacts with SRC. Phosphorylated by SRC. Expressed in pyramidal neurons of CA1 region of the hippocampus.

The protein localises to the cell projection. The protein resides in the dendrite. It is found in the postsynaptic density. Its subcellular location is the cytoplasm. It localises to the cytoskeleton. The protein localises to the membrane. Its function is as follows. Postsynaptic MAGUK scaffold protein that links CADM1 cell adhesion molecules to core components of the postsynaptic density. In CA1 pyramidal neurons, required for synaptic KCNN2-containing channel function and long-term potentiation expression. Seems to negatively regulate SRC function in epithelial cells. The sequence is that of MAGUK p55 subfamily member 2 from Mus musculus (Mouse).